We begin with the raw amino-acid sequence, 752 residues long: MPPNTPDASDARPPQADTETHSHSESENPVIESPKPKAHAPLTNQDWWPDQVDVSRLHKQPIEGNPLGAGFNYAEEFQKLDVEALRADMLELMTSSQDWWPRDYGTYAGLFIRMSWHAAGTYRIFDGRGGAGQGAQRFAPINSWPDNVSLDKARRLLWPIKQKYGNKISWADLIIFAGNVALESAGFKTFGFAFGRQDIWEPEEILWGQEDTWLGTDKRYGGTNDSTNRELANPYGATTMGLIYVNPEGPEGKPDPLAAAHDIRETFGRMAMNDEETAALIVGGHTLGKTHGPGPGDLVGPEPEAAPIEQQGLGWKCAFGSGKGSDTITSGLEVVWTTTPTKWSNSYLEILYGYEWELTKSPGDAWQFEAKDAEAIIPDPFGGPPRKPTMLVTDISMRVDPIYGPITRRWLEHPEELNEAFAKAWYKLLHRDMGPISRYLGPWIPEPQLWQDPVPDVDHPLVDEQDIAALKEKLLDSGLSVQQLVKTAWSAAASFRGTDKRGGANGGRLRLQPQRNWEVNEPSELDKALPVLERIAQDFNASASDGKKISLADLIVLGGSAAIEKAARDGGYEVKVHFVAGRTDASQENTDVDSFAVLEPRADGFRNFVRPGDKAPLEQLLVDKAYFLNLTAPEMTVLVGGLRALNTNHGGSKHGVFTANPGALSNDFFVNLLDMSTEWKPSETAENVYEGRDRRTGQTRWTATANDLVFGSNSVLRAVAEVYAQEDNKAKMIEDFVAAWVKVMNNDRFDLD.

Residues 1 to 45 (MPPNTPDASDARPPQADTETHSHSESENPVIESPKPKAHAPLTNQ) are disordered. A cross-link (tryptophyl-tyrosyl-methioninium (Trp-Tyr) (with M-270)) is located at residues 116–244 (WHAAGTYRIF…YGATTMGLIY (129 aa)). Residue histidine 117 is the Proton acceptor of the active site. Residues 244–270 (YVNPEGPEGKPDPLAAAHDIRETFGRM) constitute a cross-link (tryptophyl-tyrosyl-methioninium (Tyr-Met) (with W-116)). Histidine 285 serves as a coordination point for heme b.

It belongs to the peroxidase family. Peroxidase/catalase subfamily. In terms of assembly, homodimer or homotetramer. The cofactor is heme b. Formation of the three residue Trp-Tyr-Met cross-link is important for the catalase, but not the peroxidase activity of the enzyme.

The catalysed reaction is H2O2 + AH2 = A + 2 H2O. It catalyses the reaction 2 H2O2 = O2 + 2 H2O. Bifunctional enzyme with both catalase and broad-spectrum peroxidase activity. May play a role in the intracellular survival of mycobacteria. The polypeptide is Catalase-peroxidase 1 (Mycolicibacterium fortuitum (Mycobacterium fortuitum)).